The primary structure comprises 380 residues: Cystathionine gamma-synthase (380 aa).

Lysine 195 bears the N6-(pyridoxal phosphate)lysine mark.

This sequence belongs to the trans-sulfuration enzymes family. As to quaternary structure, homotetramer. Pyridoxal 5'-phosphate serves as cofactor.

The protein resides in the cytoplasm. It carries out the reaction O-succinyl-L-homoserine + L-cysteine = L,L-cystathionine + succinate + H(+). The protein operates within amino-acid biosynthesis; L-methionine biosynthesis via de novo pathway; L-cystathionine from O-succinyl-L-homoserine: step 1/1. Its activity is regulated as follows. Four natural products, alpha-lapachone, 9-hydroxy-alpha-lapachone, Paulownin, and Yangambin, show strong inhibitory activities against CGS. All these four inhibitors prevent the binding of OSHS to CGS in a non-competitive fashion. These compounds are specific inhibitors against CGS from H.pylori relative to E.coli since they exhibit very low inhibition activities against CGS from E.coli. In terms of biological role, catalyzes the formation of L-cystathionine from O-succinyl-L-homoserine (OSHS) and L-cysteine, via a gamma-replacement reaction. In the absence of thiol, catalyzes gamma-elimination to form 2-oxobutanoate, succinate and ammonia. This Helicobacter pylori (Campylobacter pylori) protein is Cystathionine gamma-synthase (metB).